Reading from the N-terminus, the 691-residue chain is Elongation factor G (691 aa).

One can recognise a tr-type G domain in the interval 8–282; it reads ERVRNIGIAA…AVIDYLPAPI (275 aa). GTP-binding positions include 17–24, 81–85, and 135–138; these read AHIDAGKT, DTPGH, and NKMD.

This sequence belongs to the TRAFAC class translation factor GTPase superfamily. Classic translation factor GTPase family. EF-G/EF-2 subfamily.

The protein resides in the cytoplasm. Catalyzes the GTP-dependent ribosomal translocation step during translation elongation. During this step, the ribosome changes from the pre-translocational (PRE) to the post-translocational (POST) state as the newly formed A-site-bound peptidyl-tRNA and P-site-bound deacylated tRNA move to the P and E sites, respectively. Catalyzes the coordinated movement of the two tRNA molecules, the mRNA and conformational changes in the ribosome. The protein is Elongation factor G of Prochlorococcus marinus (strain SARG / CCMP1375 / SS120).